We begin with the raw amino-acid sequence, 282 residues long: Shikimate dehydrogenase (NADP(+)) (282 aa).

Residues 16–18 and Thr63 contribute to the shikimate site; that span reads SLS. Lys67 serves as the catalytic Proton acceptor. Residues Asn88 and Asp103 each coordinate shikimate. NADP(+) contacts are provided by residues 128–132 and Gly243; that span reads GAGGA.

It belongs to the shikimate dehydrogenase family. In terms of assembly, homodimer.

It catalyses the reaction shikimate + NADP(+) = 3-dehydroshikimate + NADPH + H(+). The protein operates within metabolic intermediate biosynthesis; chorismate biosynthesis; chorismate from D-erythrose 4-phosphate and phosphoenolpyruvate: step 4/7. In terms of biological role, involved in the biosynthesis of the chorismate, which leads to the biosynthesis of aromatic amino acids. Catalyzes the reversible NADPH linked reduction of 3-dehydroshikimate (DHSA) to yield shikimate (SA). The polypeptide is Shikimate dehydrogenase (NADP(+)) (Xylella fastidiosa (strain 9a5c)).